Here is a 429-residue protein sequence, read N- to C-terminus: Divergent protein kinase domain 2A (429 aa).

The first 34 residues, 1–34 (MLRLASLKFGRLFRYAKVLFAASLLVVMLLNTHS), serve as a signal peptide directing secretion.

The protein belongs to the DIPK family.

Its subcellular location is the cytoplasmic vesicle. The protein localises to the COPI-coated vesicle. The protein resides in the golgi apparatus. It is found in the secreted. Functionally, may play a role in cardiomyocyte proliferation through paracrine signaling and activation of the PPI3K-AKT-CDK7 signaling cascade. In Xenopus tropicalis (Western clawed frog), this protein is Divergent protein kinase domain 2A (dipk2a).